The primary structure comprises 473 residues: Cholesterol 22-monohydroxylase CYP90B52 (473 aa).

Residues 2–22 (EGLLLLLPTAIIALYLYISLI) traverse the membrane as a helical segment. Position 422 (C422) interacts with heme.

This sequence belongs to the cytochrome P450 family. In terms of tissue distribution, mainly expressed in leaves and roots and, at low levels, in fruits and stems.

The protein localises to the membrane. The catalysed reaction is cholesterol + reduced [NADPH--hemoprotein reductase] + O2 = (22S)-22-hydroxycholesterol + oxidized [NADPH--hemoprotein reductase] + H2O + H(+). Its pathway is steroid metabolism; cholesterol metabolism. In terms of biological role, canonical brassinosteroid (BR)-biosynthetic enzyme capable of converting cholesterol to 22S-hydroxycholesterol via sterol-C22 hydroxylation. This chain is Cholesterol 22-monohydroxylase CYP90B52, found in Paris polyphylla (Daiswa polyphylla).